The sequence spans 52 residues: MAVPKKRTSISKKRIRKQIWKRKGYWISLKAFSLGKSLSTGNSKSFFVQQNK.

Belongs to the bacterial ribosomal protein bL32 family.

Its subcellular location is the plastid. It is found in the chloroplast. The polypeptide is Large ribosomal subunit protein bL32c (Aethionema grandiflorum (Persian stone-cress)).